A 206-amino-acid polypeptide reads, in one-letter code: 2,3-bisphosphoglycerate-dependent phosphoglycerate mutase (206 aa).

Residues 9–16 (RHGQSEWN), 22–23 (TG), R61, 88–91 (ERDY), K99, 115–116 (RR), and 159–160 (GN) contribute to the substrate site. The active-site Tele-phosphohistidine intermediate is the H10. The Proton donor/acceptor role is filled by E88.

This sequence belongs to the phosphoglycerate mutase family. BPG-dependent PGAM subfamily. As to quaternary structure, homodimer.

It catalyses the reaction (2R)-2-phosphoglycerate = (2R)-3-phosphoglycerate. The protein operates within carbohydrate degradation; glycolysis; pyruvate from D-glyceraldehyde 3-phosphate: step 3/5. In terms of biological role, catalyzes the interconversion of 2-phosphoglycerate and 3-phosphoglycerate. This is 2,3-bisphosphoglycerate-dependent phosphoglycerate mutase from Brucella anthropi (strain ATCC 49188 / DSM 6882 / CCUG 24695 / JCM 21032 / LMG 3331 / NBRC 15819 / NCTC 12168 / Alc 37) (Ochrobactrum anthropi).